Consider the following 270-residue polypeptide: 3-methyl-2-oxobutanoate hydroxymethyltransferase (270 aa).

Residues D42 and D86 each contribute to the Mg(2+) site. 3-methyl-2-oxobutanoate contacts are provided by residues D42–S43, D86, and K116. E118 contacts Mg(2+). Catalysis depends on E185, which acts as the Proton acceptor.

It belongs to the PanB family. As to quaternary structure, homodecamer; pentamer of dimers. The cofactor is Mg(2+).

It localises to the cytoplasm. It catalyses the reaction 3-methyl-2-oxobutanoate + (6R)-5,10-methylene-5,6,7,8-tetrahydrofolate + H2O = 2-dehydropantoate + (6S)-5,6,7,8-tetrahydrofolate. Its pathway is cofactor biosynthesis; (R)-pantothenate biosynthesis; (R)-pantoate from 3-methyl-2-oxobutanoate: step 1/2. Its function is as follows. Catalyzes the reversible reaction in which hydroxymethyl group from 5,10-methylenetetrahydrofolate is transferred onto alpha-ketoisovalerate to form ketopantoate. The protein is 3-methyl-2-oxobutanoate hydroxymethyltransferase of Synechococcus sp. (strain CC9902).